A 564-amino-acid polypeptide reads, in one-letter code: Pachytene checkpoint protein 2 (564 aa).

314-321 (GPPGTGKT) serves as a coordination point for ATP.

This sequence belongs to the AAA ATPase family. PCH2 subfamily.

It is found in the nucleus. It localises to the nucleolus. The protein resides in the chromosome. In terms of biological role, required for the pachytene checkpoint, the meiotic checkpoint that prevents chromosome segregation when defects in recombination and synaptonemal complex formation occurred. Represses meiotic recombination in the rDNA, probably by excluding the meiosis-specific protein HOP1 from the nucleolar region. In Saccharomyces cerevisiae (strain ATCC 204508 / S288c) (Baker's yeast), this protein is Pachytene checkpoint protein 2 (PCH2).